The sequence spans 293 residues: Small ribosomal subunit biogenesis GTPase RsgA (293 aa).

The CP-type G domain maps to 63–223 (QNELVRPPIA…VADTPGFSAL (161 aa)). GTP contacts are provided by residues 112 to 115 (SKID) and 166 to 174 (GQSGVGKSS). 4 residues coordinate Zn(2+): Cys247, Cys252, His254, and Cys260.

The protein belongs to the TRAFAC class YlqF/YawG GTPase family. RsgA subfamily. In terms of assembly, monomer. Associates with 30S ribosomal subunit, binds 16S rRNA. The cofactor is Zn(2+).

It localises to the cytoplasm. Its function is as follows. One of several proteins that assist in the late maturation steps of the functional core of the 30S ribosomal subunit. Helps release RbfA from mature subunits. May play a role in the assembly of ribosomal proteins into the subunit. Circularly permuted GTPase that catalyzes slow GTP hydrolysis, GTPase activity is stimulated by the 30S ribosomal subunit. This Geobacillus kaustophilus (strain HTA426) protein is Small ribosomal subunit biogenesis GTPase RsgA.